We begin with the raw amino-acid sequence, 583 residues long: DNA ligase (583 aa).

Glutamate 249 is a binding site for ATP. Lysine 251 functions as the N6-AMP-lysine intermediate in the catalytic mechanism. ATP-binding residues include arginine 256, arginine 271, glutamate 301, phenylalanine 341, arginine 416, and lysine 422.

The protein belongs to the ATP-dependent DNA ligase family. It depends on Mg(2+) as a cofactor.

It catalyses the reaction ATP + (deoxyribonucleotide)n-3'-hydroxyl + 5'-phospho-(deoxyribonucleotide)m = (deoxyribonucleotide)n+m + AMP + diphosphate.. In terms of biological role, DNA ligase that seals nicks in double-stranded DNA during DNA replication, DNA recombination and DNA repair. This chain is DNA ligase, found in Pyrobaculum calidifontis (strain DSM 21063 / JCM 11548 / VA1).